We begin with the raw amino-acid sequence, 835 residues long: MKRRNDSECTAPLKKQKKRVAELALSLSSTSDDEPPSSVNHAAKASATSLSGSDSETEGKQRSSDSFDDAFKADSLVEGTSSRYSMYNSVSQKLMAKMGFKEGEGLGKYSQGRKDIVEASNQKGRRGLGLTLQGFDQELNVNWRDEPEPSACEQVSWFPECTTEIPDTQEMSDWMVVGKRKMIIEDETEFCGEGLLRSVLKCKSVFDVLDGEEMRRARTRANPYEMIRGVFFLNRAAMKMANMDFVFDRMFTNPRDSYGKPLVKDREAELLYFADVCAGPGGFSEYVLWRKRWHAKGFGLTLKGPHDFKLEDFYSASSELFEPYYGEGGIDGDGDITRPENINAFRNFVLDNTDHKGVHFLMADGGFSVEGQENLQEILSKQLLLCQFLMALSVVRTGGHFICKTFDLFTPFSVGLIYLLYCCFERVCLFKPITSRPANSERYVVCKGLKVGIDEVRDYLFSVNIKLNQLRNTDSDVNLVVPLEVIKGDHEFTDYMIRSNEGHCSLQIKALAKIRAFVQDTTLIEPRQAEIRKECLRLWGIPDQARVAPSSTDPKSKFFELIQGTEIDIFSYKPTPLTAKTLEKIRPVLDYRCMVSGSEQKFLIGLGKSQIYTWDGRQSDRWVKLDLKTELPRDTLLSVEIVHELKGEGKAQRKISAIHILDVLVLNGSDVREQHFNQRIQLAEKFVKAVSKPSRPDMNPIRVKEVYRLEEMEKIFVRLEMKIIKGSSGTPKLSYTGRDDRHFVPTGLYIVRTVNEPWTMGFSKSFKRKFFYNKKTKNSTFDLPADAIAPFHICYYGRLFWEWGDGIRVHESQKPQDPDKLSKEDVLSFIQTHSA.

A disordered region spans residues 1–66; sequence MKRRNDSECT…TEGKQRSSDS (66 aa). The Bipartite nuclear localization signal signature appears at 2-19; it reads KRRNDSECTAPLKKQKKR. Residues Ser28, Ser31, Ser53, Ser66, and Ser91 each carry the phosphoserine modification. Positions 57 to 66 are enriched in basic and acidic residues; that stretch reads TEGKQRSSDS. Residues 87–133 form the G-patch domain; that stretch reads YNSVSQKLMAKMGFKEGEGLGKYSQGRKDIVEASNQKGRRGLGLTLQ. Lys108 is modified (N6-acetyllysine). Substrate-binding positions include 203–207 and Arg218; that span reads KSVFD. Residues 231-450 form the RrmJ-type SAM-dependent 2'-O-MTase domain; it reads FFLNRAAMKM…ERYVVCKGLK (220 aa). Asn234 provides a ligand contact to S-adenosyl-L-methionine. The active site involves Lys239. S-adenosyl-L-methionine-binding positions include 277-283 and 335-336; these read CAGPGGF and DI. Asp364 is a catalytic residue. 374 to 376 is a binding site for substrate; sequence NLQ. Lys404 functions as the Proton acceptor in the catalytic mechanism. Asn439 provides a ligand contact to substrate. Residues 727–835 are interaction with POLR2A; sequence SSGTPKLSYT…VLSFIQTHSA (109 aa). Residues 752–786 enclose the WW domain; it reads RTVNEPWTMGFSKSFKRKFFYNKKTKNSTFDLPAD.

As to quaternary structure, interacts with POLR2A (via C-terminus).

It localises to the nucleus. It carries out the reaction a 5'-end (N(7)-methyl 5'-triphosphoguanosine)-ribonucleoside in mRNA + S-adenosyl-L-methionine = a 5'-end (N(7)-methyl 5'-triphosphoguanosine)-(2'-O-methyl-ribonucleoside) in mRNA + S-adenosyl-L-homocysteine + H(+). In terms of biological role, S-adenosyl-L-methionine-dependent methyltransferase that mediates mRNA cap1 2'-O-ribose methylation to the 5'-cap structure of mRNAs. Methylates the ribose of the first nucleotide of a m(7)GpppG-capped mRNA and small nuclear RNA (snRNA) to produce m(7)GpppRm (cap1). Displays a preference for cap0 transcripts. Cap1 modification is linked to higher levels of translation. May be involved in the interferon response pathway. In Bos taurus (Bovine), this protein is Cap-specific mRNA (nucleoside-2'-O-)-methyltransferase 1 (CMTR1).